The chain runs to 459 residues: Bifunctional protein GlmU (459 aa).

The pyrophosphorylase stretch occupies residues 1–229 (MSNFAIILAA…FDESLGVNDR (229 aa)). Residues 8-11 (LAAG), Lys-22, Gln-72, and 77-78 (GT) each bind UDP-N-acetyl-alpha-D-glucosamine. Residue Asp-102 participates in Mg(2+) binding. UDP-N-acetyl-alpha-D-glucosamine contacts are provided by Gly-139, Glu-154, Asn-169, and Asn-227. Residue Asn-227 participates in Mg(2+) binding. Residues 230–250 (VALATAESVMRRRINHKHMVN) form a linker region. An N-acetyltransferase region spans residues 251–459 (GVSFVNPEAT…TRLPHHPKNQ (209 aa)). UDP-N-acetyl-alpha-D-glucosamine contacts are provided by Arg-332 and Lys-350. His-362 serves as the catalytic Proton acceptor. Residues Tyr-365 and Asn-376 each contribute to the UDP-N-acetyl-alpha-D-glucosamine site. Residues Ala-379, 385 to 386 (NY), Ser-404, Ala-422, and Arg-439 each bind acetyl-CoA.

This sequence in the N-terminal section; belongs to the N-acetylglucosamine-1-phosphate uridyltransferase family. In the C-terminal section; belongs to the transferase hexapeptide repeat family. In terms of assembly, homotrimer. Requires Mg(2+) as cofactor.

It is found in the cytoplasm. The catalysed reaction is alpha-D-glucosamine 1-phosphate + acetyl-CoA = N-acetyl-alpha-D-glucosamine 1-phosphate + CoA + H(+). It carries out the reaction N-acetyl-alpha-D-glucosamine 1-phosphate + UTP + H(+) = UDP-N-acetyl-alpha-D-glucosamine + diphosphate. It functions in the pathway nucleotide-sugar biosynthesis; UDP-N-acetyl-alpha-D-glucosamine biosynthesis; N-acetyl-alpha-D-glucosamine 1-phosphate from alpha-D-glucosamine 6-phosphate (route II): step 2/2. The protein operates within nucleotide-sugar biosynthesis; UDP-N-acetyl-alpha-D-glucosamine biosynthesis; UDP-N-acetyl-alpha-D-glucosamine from N-acetyl-alpha-D-glucosamine 1-phosphate: step 1/1. It participates in bacterial outer membrane biogenesis; LPS lipid A biosynthesis. Functionally, catalyzes the last two sequential reactions in the de novo biosynthetic pathway for UDP-N-acetylglucosamine (UDP-GlcNAc). The C-terminal domain catalyzes the transfer of acetyl group from acetyl coenzyme A to glucosamine-1-phosphate (GlcN-1-P) to produce N-acetylglucosamine-1-phosphate (GlcNAc-1-P), which is converted into UDP-GlcNAc by the transfer of uridine 5-monophosphate (from uridine 5-triphosphate), a reaction catalyzed by the N-terminal domain. The protein is Bifunctional protein GlmU of Streptococcus pneumoniae serotype 2 (strain D39 / NCTC 7466).